Reading from the N-terminus, the 427-residue chain is Trigger factor (427 aa).

Residues 163–248 (GDTVVIDFVG…VNEVKAKELP (86 aa)) enclose the PPIase FKBP-type domain.

Belongs to the FKBP-type PPIase family. Tig subfamily.

The protein resides in the cytoplasm. It catalyses the reaction [protein]-peptidylproline (omega=180) = [protein]-peptidylproline (omega=0). Its function is as follows. Involved in protein export. Acts as a chaperone by maintaining the newly synthesized protein in an open conformation. Functions as a peptidyl-prolyl cis-trans isomerase. The polypeptide is Trigger factor (tig) (Lactococcus lactis subsp. lactis (strain IL1403) (Streptococcus lactis)).